The primary structure comprises 187 residues: Orotate phosphoribosyltransferase (187 aa).

Glu-110–Ser-118 contributes to the 5-phospho-alpha-D-ribose 1-diphosphate binding site. Orotate contacts are provided by Thr-114 and Arg-142.

Belongs to the purine/pyrimidine phosphoribosyltransferase family. PyrE subfamily. In terms of assembly, homodimer. Mg(2+) serves as cofactor.

It catalyses the reaction orotidine 5'-phosphate + diphosphate = orotate + 5-phospho-alpha-D-ribose 1-diphosphate. It participates in pyrimidine metabolism; UMP biosynthesis via de novo pathway; UMP from orotate: step 1/2. Catalyzes the transfer of a ribosyl phosphate group from 5-phosphoribose 1-diphosphate to orotate, leading to the formation of orotidine monophosphate (OMP). The protein is Orotate phosphoribosyltransferase of Thermotoga maritima (strain ATCC 43589 / DSM 3109 / JCM 10099 / NBRC 100826 / MSB8).